Reading from the N-terminus, the 116-residue chain is Putative pterin-4-alpha-carbinolamine dehydratase (116 aa).

This sequence belongs to the pterin-4-alpha-carbinolamine dehydratase family.

The catalysed reaction is (4aS,6R)-4a-hydroxy-L-erythro-5,6,7,8-tetrahydrobiopterin = (6R)-L-erythro-6,7-dihydrobiopterin + H2O. The chain is Putative pterin-4-alpha-carbinolamine dehydratase from Xylella fastidiosa (strain 9a5c).